A 96-amino-acid chain; its full sequence is Putative pterin-4-alpha-carbinolamine dehydratase (96 aa).

The protein belongs to the pterin-4-alpha-carbinolamine dehydratase family.

The catalysed reaction is (4aS,6R)-4a-hydroxy-L-erythro-5,6,7,8-tetrahydrobiopterin = (6R)-L-erythro-6,7-dihydrobiopterin + H2O. This chain is Putative pterin-4-alpha-carbinolamine dehydratase, found in Prochlorococcus marinus (strain MIT 9312).